We begin with the raw amino-acid sequence, 594 residues long: Tripeptidyl-peptidase sed4 (594 aa).

The first 20 residues, 1 to 20 (MLSSTLYAGWLLSLAAPALC), serve as a signal peptide directing secretion. A propeptide spans 21-187 (VVQEKLSAVP…AVKLPALPRR (167 aa)) (removed in mature form). Asparagine 191, asparagine 229, and asparagine 250 each carry an N-linked (GlcNAc...) asparagine glycan. The Peptidase S53 domain maps to 197 to 594 (LITPDCLVEM…MKLKELVLSL (398 aa)). Active-site charge relay system residues include glutamate 272, aspartate 276, and serine 494. The Ca(2+) site is built by aspartate 536 and isoleucine 537. Residue asparagine 568 is glycosylated (N-linked (GlcNAc...) asparagine). Ca(2+) is bound by residues glycine 572 and aspartate 574.

The cofactor is Ca(2+). Post-translationally, N-glycosylated.

Its subcellular location is the secreted. It localises to the extracellular space. The enzyme catalyses Release of an N-terminal tripeptide from a polypeptide.. Functionally, secreted tripeptidyl-peptidase which degrades proteins at acidic pHs and is involved in virulence. The sequence is that of Tripeptidyl-peptidase sed4 (sed4) from Aspergillus fumigatus (strain ATCC MYA-4609 / CBS 101355 / FGSC A1100 / Af293) (Neosartorya fumigata).